Consider the following 241-residue polypeptide: Uridylate kinase (241 aa).

An ATP-binding site is contributed by 12–15 (KISG). An involved in allosteric activation by GTP region spans residues 20–25 (GEKGTG). Position 54 (Gly54) interacts with UMP. Residues Gly55 and Arg59 each contribute to the ATP site. Residues Asp74 and 135 to 142 (TGNPYFST) contribute to the UMP site. ATP-binding residues include Asn163, Tyr169, and Asp172.

This sequence belongs to the UMP kinase family. Homohexamer.

Its subcellular location is the cytoplasm. It carries out the reaction UMP + ATP = UDP + ADP. The protein operates within pyrimidine metabolism; CTP biosynthesis via de novo pathway; UDP from UMP (UMPK route): step 1/1. Allosterically activated by GTP. Inhibited by UTP. In terms of biological role, catalyzes the reversible phosphorylation of UMP to UDP. This is Uridylate kinase from Lactobacillus delbrueckii subsp. bulgaricus (strain ATCC 11842 / DSM 20081 / BCRC 10696 / JCM 1002 / NBRC 13953 / NCIMB 11778 / NCTC 12712 / WDCM 00102 / Lb 14).